A 541-amino-acid chain; its full sequence is Chaperonin GroEL (541 aa).

Residues 29-32 (TLGP), 86-90 (DGTTT), glycine 413, 478-480 (NAA), and aspartate 494 contribute to the ATP site.

This sequence belongs to the chaperonin (HSP60) family. In terms of assembly, forms a cylinder of 14 subunits composed of two heptameric rings stacked back-to-back. Interacts with the co-chaperonin GroES.

The protein resides in the cytoplasm. It catalyses the reaction ATP + H2O + a folded polypeptide = ADP + phosphate + an unfolded polypeptide.. Functionally, together with its co-chaperonin GroES, plays an essential role in assisting protein folding. The GroEL-GroES system forms a nano-cage that allows encapsulation of the non-native substrate proteins and provides a physical environment optimized to promote and accelerate protein folding. In Agathobacter rectalis (strain ATCC 33656 / DSM 3377 / JCM 17463 / KCTC 5835 / VPI 0990) (Eubacterium rectale), this protein is Chaperonin GroEL.